A 51-amino-acid chain; its full sequence is Non-specific lipid-transfer protein (51 aa).

It belongs to the plant LTP family.

Plant non-specific lipid-transfer proteins transfer phospholipids as well as galactolipids across membranes. May play a role in wax or cutin deposition in the cell walls of expanding epidermal cells and certain secretory tissues. The protein is Non-specific lipid-transfer protein of Lycium barbarum (Barbary matrimony-vine).